The following is a 471-amino-acid chain: MTDLPDSTRWQLWIVAFGFFMQSLDTTIVNTALPSMAQSLGESPLHMHMVIVSYVLTVAVMLPASGWLADKVGVRNIFFTAIVLFTLGSLFCALSGTLNELLLARALQGVGGAMMVPVGRLTVMKIVPREQYMAAMTFVTLPGQVGPLLGPALGGLLVEYASWHWIFLINIPVGIIGAIATLMLMPNYTMQTRRFDLSGFLLLAVGMAVLTLALDGSKGTGLSPLTIAGLVAVGVVALVLYLLHARNNNRALFSLKLFRTRTFSLGLAGSFAGRIGSGMLPFMTPVFLQIGLGFSPFHAGLMMIPMVLGSMGMKRIVVQVVNCFGYRRVLVATTLGLSLVTLLFMTTALLGWYYVLPFVLFLQGMVNSTRFSSMNTLTLKDLPDNLASSGNSLLSMIMQLSMSIGVTIAGLLLGLFGSQHVSVDSGTTQTVFMYTWLSMALIIALPAFIFARVPNDTHQNVAISRRKRSAQ.

Residues 1–11 lie on the Periplasmic side of the membrane; that stretch reads MTDLPDSTRWQ. The chain crosses the membrane as a helical span at residues 12–32; that stretch reads LWIVAFGFFMQSLDTTIVNTA. The Cytoplasmic portion of the chain corresponds to 33–48; sequence LPSMAQSLGESPLHMH. A helical membrane pass occupies residues 49–69; the sequence is MVIVSYVLTVAVMLPASGWLA. Residues 70-76 are Periplasmic-facing; the sequence is DKVGVRN. A helical transmembrane segment spans residues 77 to 97; sequence IFFTAIVLFTLGSLFCALSGT. Over 98-101 the chain is Cytoplasmic; sequence LNEL. Residues 102–124 traverse the membrane as a helical segment; sequence LLARALQGVGGAMMVPVGRLTVM. The Periplasmic portion of the chain corresponds to 125–137; sequence KIVPREQYMAAMT. The helical transmembrane segment at 138-158 threads the bilayer; it reads FVTLPGQVGPLLGPALGGLLV. At 159-164 the chain is on the cytoplasmic side; the sequence is EYASWH. Residues 165–185 traverse the membrane as a helical segment; that stretch reads WIFLINIPVGIIGAIATLMLM. Topologically, residues 186 to 196 are periplasmic; sequence PNYTMQTRRFD. Residues 197–217 form a helical membrane-spanning segment; sequence LSGFLLLAVGMAVLTLALDGS. The Cytoplasmic segment spans residues 218 to 224; the sequence is KGTGLSP. The helical transmembrane segment at 225–245 threads the bilayer; it reads LTIAGLVAVGVVALVLYLLHA. Residues 246 to 262 lie on the Periplasmic side of the membrane; it reads RNNNRALFSLKLFRTRT. A helical membrane pass occupies residues 263–283; sequence FSLGLAGSFAGRIGSGMLPFM. Residues 284–285 lie on the Cytoplasmic side of the membrane; that stretch reads TP. Residues 286-306 traverse the membrane as a helical segment; the sequence is VFLQIGLGFSPFHAGLMMIPM. Topologically, residues 307-341 are periplasmic; sequence VLGSMGMKRIVVQVVNCFGYRRVLVATTLGLSLVT. A helical membrane pass occupies residues 342–362; sequence LLFMTTALLGWYYVLPFVLFL. Over 363–395 the chain is Cytoplasmic; it reads QGMVNSTRFSSMNTLTLKDLPDNLASSGNSLLS. Residues 396 to 416 traverse the membrane as a helical segment; that stretch reads MIMQLSMSIGVTIAGLLLGLF. At 417–430 the chain is on the periplasmic side; the sequence is GSQHVSVDSGTTQT. Residues 431 to 451 form a helical membrane-spanning segment; that stretch reads VFMYTWLSMALIIALPAFIFA. Over 452–471 the chain is Cytoplasmic; that stretch reads RVPNDTHQNVAISRRKRSAQ.

It belongs to the major facilitator superfamily. TCR/Tet family.

The protein localises to the cell inner membrane. The protein is Putative multidrug resistance protein MdtD of Escherichia coli O139:H28 (strain E24377A / ETEC).